Consider the following 953-residue polypeptide: Nucleotide-binding oligomerization domain-containing protein 1 (953 aa).

In terms of domain architecture, CARD spans 15–105 (ESHPHIQLLK…AYVDLRPWLL (91 aa)). Positions 196–531 (ETIFILGDAG…AFFTAFFLVL (336 aa)) constitute an NACHT domain. Residue 202–209 (GDAGVGKS) coordinates ATP. S-palmitoyl cysteine attachment occurs at residues Cys558 and Cys567. 9 LRR repeats span residues 632 to 656 (LKSL…IWML), 702 to 725 (FPKR…ELQP), 727 to 750 (FSRL…VLSE), 755 to 778 (YKIV…YVTK), 783 to 806 (CKGL…YLAL), 839 to 862 (HPSL…SLAR), 867 to 891 (NTSL…LAEM), 895 to 918 (NQTL…QLAD), and 923 to 946 (NTGI…VYED). A lipid anchor (S-palmitoyl cysteine) is attached at Cys952.

This sequence belongs to the NOD1-NOD2 family. As to quaternary structure, homooligomer: homooligomerizes following ligand-binding, promoting RIPK2 recruitment. Interacts (via CARD domain) with RIPK2 (via CARD domain). Following RIPK2 recruitment, RIPK2 homooligomerizes via its CARD domain and forms long filaments named RIPosomes. Interacts with ARHGEF2. Interacts (via CARD domain) with ubiquitin; inhibiting interaction with RIPK2. Interacts with NLRP10 and recruits it to the cell membrane following invasive bacterial infection. Interacts with IFIH1; this interaction promotes transcription of antiviral genes and inhibition of viral replication. Interacts with IRGM; promoting NOD1 degradation. Interacts with ATG16L1. Post-translationally, palmitoylated. Palmitoylation is required for proper recruitment to the bacterial entry site and hence for proper signaling upon cognate peptidoglycan detection. In terms of processing, ubiquitinated. 'Lys-48'-linked polyubiquitination by RNF34 promotes proteasomal degradation and thereby negatively regulates NOD1 for instance in NF-kappa-B activation. Degraded via selective autophagy following interaction with IRGM. IRGM promotes NOD1-RIPK2 RIPosome recruitment to autophagosome membranes, promoting their SQSTM1/p62-dependent autophagic degradation. As to expression, highly expressed in adult heart, skeletal muscle, pancreas, spleen and ovary. Also detected in placenta, lung, liver, kidney, thymus, testis, small intestine and colon.

The protein resides in the cell membrane. Its subcellular location is the apical cell membrane. It is found in the basolateral cell membrane. The protein localises to the cytoplasm. Pattern recognition receptor (PRR) that detects bacterial peptidoglycan fragments and other danger signals and thus participates in both innate and adaptive immune responses. Specifically recognizes and binds gamma-D-glutamyl-meso-diaminopimelic acid (iE-DAP), a dipeptide present in peptidoglycan of Gram-negative bacteria. Preferentially binds iE-DAP in tripeptide-containing muropeptides (MurNAc-TriDAP or TriDAP). Ligand binding triggers oligomerization that facilitates the binding and subsequent activation of the proximal adapter receptor-interacting RIPK2. Following recruitment, RIPK2 undergoes 'Met-1'- (linear) and 'Lys-63'-linked polyubiquitination by E3 ubiquitin-protein ligases XIAP, BIRC2, BIRC3 and the LUBAC complex, becoming a scaffolding protein for downstream effectors, triggering activation of the NF-kappa-B and MAP kinases signaling. This in turn leads to the transcriptional activation of hundreds of genes involved in immune response. Also acts as a regulator of antiviral response elicited by dsRNA and the expression of RLR pathway members by targeting IFIH1 and TRAF3 to modulate the formation of IFIH1-MAVS and TRAF3-MAVS complexes leading to increased transcription of type I IFNs. Also acts as a regulator of autophagy via its interaction with ATG16L1, possibly by recruiting ATG16L1 at the site of bacterial entry. Besides recognizing pathogens, also involved in the endoplasmic reticulum stress response: acts by sensing and binding to the cytosolic metabolite sphingosine-1-phosphate generated in response to endoplasmic reticulum stress, initiating an inflammation process that leads to activation of the NF-kappa-B and MAP kinases signaling. In addition, plays a role in insulin trafficking in beta cells in a cell-autonomous manner. Mechanistically, upon recognizing cognate ligands, NOD1 and RIPK2 localize to insulin vesicles where they recruit RAB1A to direct insulin trafficking through the cytoplasm. Functionally, in contrast to isoform 1, does not efficiently recognize and bind gamma-D-glutamyl-meso-diaminopimelic acid (iE-DAP) ligand. This chain is Nucleotide-binding oligomerization domain-containing protein 1, found in Homo sapiens (Human).